The primary structure comprises 663 residues: Fructose-1,6-bisphosphatase class 3 1 (663 aa).

Belongs to the FBPase class 3 family. Requires Mn(2+) as cofactor.

The enzyme catalyses beta-D-fructose 1,6-bisphosphate + H2O = beta-D-fructose 6-phosphate + phosphate. The protein operates within carbohydrate biosynthesis; gluconeogenesis. The sequence is that of Fructose-1,6-bisphosphatase class 3 1 from Clostridium beijerinckii (strain ATCC 51743 / NCIMB 8052) (Clostridium acetobutylicum).